The chain runs to 162 residues: Phosphopantetheine adenylyltransferase (162 aa).

Ser11 lines the substrate pocket. Residues 11–12 (SF) and His19 each bind ATP. The substrate site is built by Lys43, Val76, and Arg90. Residues 91–93 (GLR), Glu101, and 126–132 (HLYISSS) contribute to the ATP site.

It belongs to the bacterial CoaD family. Homohexamer. It depends on Mg(2+) as a cofactor.

The protein localises to the cytoplasm. The catalysed reaction is (R)-4'-phosphopantetheine + ATP + H(+) = 3'-dephospho-CoA + diphosphate. It participates in cofactor biosynthesis; coenzyme A biosynthesis; CoA from (R)-pantothenate: step 4/5. Its function is as follows. Reversibly transfers an adenylyl group from ATP to 4'-phosphopantetheine, yielding dephospho-CoA (dPCoA) and pyrophosphate. The polypeptide is Phosphopantetheine adenylyltransferase (Streptococcus pneumoniae (strain Hungary19A-6)).